A 234-amino-acid chain; its full sequence is GTP:AMP phosphotransferase, mitochondrial (234 aa).

A GTP-binding site is contributed by 24 to 29 (GSGKGT). An NMP region spans residues 45-74 (SSGDILRQEIKSESTLGREATTYIAQGKLL). Residues serine 46, arginine 51, 72–74 (KLL), 103–106 (GFPR), and glutamine 110 contribute to the AMP site. Positions 144-181 (NRYVHVPSGRVYNLQYNPPKVPGLDDITGEPLTKRLDD) are LID. GTP-binding positions include arginine 145 and 154 to 155 (VY). Arginine 178 and arginine 189 together coordinate AMP. Residue serine 218 participates in GTP binding.

It belongs to the adenylate kinase family. AK3 subfamily. Monomer.

The protein resides in the mitochondrion matrix. The catalysed reaction is a ribonucleoside 5'-triphosphate + AMP = a ribonucleoside 5'-diphosphate + ADP. Functionally, involved in maintaining the homeostasis of cellular nucleotides by catalyzing the interconversion of nucleoside phosphates. Has GTP:AMP phosphotransferase and ITP:AMP phosphotransferase activities. Does not accept ATP as phosphate donor. The protein is GTP:AMP phosphotransferase, mitochondrial of Saccharomyces cerevisiae (Baker's yeast).